Reading from the N-terminus, the 151-residue chain is Aspartate 1-decarboxylase (151 aa).

Catalysis depends on Ser26, which acts as the Schiff-base intermediate with substrate; via pyruvic acid. A Pyruvic acid (Ser) modification is found at Ser26. Residue Thr58 participates in substrate binding. Catalysis depends on Tyr59, which acts as the Proton donor. Substrate is bound at residue 74 to 76; that stretch reads GGA.

The protein belongs to the PanD family. As to quaternary structure, heterooctamer of four alpha and four beta subunits. Pyruvate is required as a cofactor. Is synthesized initially as an inactive proenzyme, which is activated by self-cleavage at a specific serine bond to produce a beta-subunit with a hydroxyl group at its C-terminus and an alpha-subunit with a pyruvoyl group at its N-terminus.

Its subcellular location is the cytoplasm. It carries out the reaction L-aspartate + H(+) = beta-alanine + CO2. Its pathway is cofactor biosynthesis; (R)-pantothenate biosynthesis; beta-alanine from L-aspartate: step 1/1. Functionally, catalyzes the pyruvoyl-dependent decarboxylation of aspartate to produce beta-alanine. This Crocosphaera subtropica (strain ATCC 51142 / BH68) (Cyanothece sp. (strain ATCC 51142)) protein is Aspartate 1-decarboxylase.